Consider the following 365-residue polypeptide: Peptide chain release factor 2 (365 aa).

The residue at position 251 (glutamine 251) is an N5-methylglutamine.

This sequence belongs to the prokaryotic/mitochondrial release factor family. Methylated by PrmC. Methylation increases the termination efficiency of RF2.

Its subcellular location is the cytoplasm. Peptide chain release factor 2 directs the termination of translation in response to the peptide chain termination codons UGA and UAA. The sequence is that of Peptide chain release factor 2 from Aliarcobacter butzleri (strain RM4018) (Arcobacter butzleri).